The sequence spans 464 residues: Dihydrolipoyllysine-residue succinyltransferase component of 2-oxoglutarate dehydrogenase complex 1, mitochondrial (464 aa).

Residues 1 to 86 (MMLRAVFRRA…TALQRWVRPF (86 aa)) constitute a mitochondrion transit peptide. In terms of domain architecture, Lipoyl-binding spans 93 to 168 (VVEAVVPHMG…EPGNKVARIS (76 aa)). Lys134 is subject to N6-lipoyllysine. The interval 168-242 (STSADAVSHV…DRERRVPMTR (75 aa)) is disordered. The span at 196-210 (EKPKVESTKVAEKPK) shows a compositional bias: basic and acidic residues. Residues 211 to 220 (APSPPPPPPS) are compositionally biased toward pro residues. Catalysis depends on residues His435 and Asp439.

It belongs to the 2-oxoacid dehydrogenase family. Forms a 24-polypeptide structural core with octahedral symmetry. The cofactor is (R)-lipoate.

Its subcellular location is the mitochondrion. The enzyme catalyses N(6)-[(R)-dihydrolipoyl]-L-lysyl-[protein] + succinyl-CoA = N(6)-[(R)-S(8)-succinyldihydrolipoyl]-L-lysyl-[protein] + CoA. It participates in amino-acid degradation; L-lysine degradation via saccharopine pathway; glutaryl-CoA from L-lysine: step 6/6. In terms of biological role, the 2-oxoglutarate dehydrogenase complex catalyzes the overall conversion of 2-oxoglutarate to succinyl-CoA and CO(2). It contains multiple copies of three enzymatic components: 2-oxoglutarate dehydrogenase (E1), dihydrolipoamide succinyltransferase (E2) and lipoamide dehydrogenase (E3). In Arabidopsis thaliana (Mouse-ear cress), this protein is Dihydrolipoyllysine-residue succinyltransferase component of 2-oxoglutarate dehydrogenase complex 1, mitochondrial.